Reading from the N-terminus, the 338-residue chain is MTDLKPFLAKVASREPLTRDEARAAFDILMSGQATPSQIGGFLMALRVRGESVDEIVGAVTTMRSKMLTVEAPADAIDIVGTGGDASGTYNISTLAALIVAGAGVPVAKHGNRALSSKSGAADNLSALGVNIDVGPEIISRCIAEASVGFMFAQLHHSAMRHVGPSRVELGTRTIFNLLGPLSNPAGVRRQLLGVFSPQWLVPLAEVMRDLGSECVWVVHGDGLDEITTTGITKVAALEDGKIRSFELSPADFGVSPCVLADIKGGDGVANAAALREVLGGAKNAYRDVSLANAAASLVISGKVETIRDGMKLAAHSLDSGATALALDKLIAVSNDID.

5-phospho-alpha-D-ribose 1-diphosphate contacts are provided by residues Gly-81, 84–85 (GD), Thr-89, 91–94 (NIST), 109–117 (KHGNRALSS), and Ala-121. Position 81 (Gly-81) interacts with anthranilate. Ser-93 lines the Mg(2+) pocket. Asn-112 serves as a coordination point for anthranilate. Residue Arg-167 participates in anthranilate binding. Mg(2+) is bound by residues Asp-225 and Glu-226.

It belongs to the anthranilate phosphoribosyltransferase family. In terms of assembly, homodimer. Requires Mg(2+) as cofactor.

The catalysed reaction is N-(5-phospho-beta-D-ribosyl)anthranilate + diphosphate = 5-phospho-alpha-D-ribose 1-diphosphate + anthranilate. Its pathway is amino-acid biosynthesis; L-tryptophan biosynthesis; L-tryptophan from chorismate: step 2/5. Functionally, catalyzes the transfer of the phosphoribosyl group of 5-phosphorylribose-1-pyrophosphate (PRPP) to anthranilate to yield N-(5'-phosphoribosyl)-anthranilate (PRA). The sequence is that of Anthranilate phosphoribosyltransferase from Rhizobium etli (strain ATCC 51251 / DSM 11541 / JCM 21823 / NBRC 15573 / CFN 42).